The chain runs to 185 residues: UPF0669 protein C6orf120 homolog (185 aa).

A signal peptide spans 1–23; the sequence is MATPWRCALLMILASQVVILVKC. A glycan (N-linked (GlcNAc...) asparagine) is linked at Asn-47.

It belongs to the UPF0669 family.

The protein resides in the secreted. May be involved in induction of apoptosis in CD4(+) T-cells, but not CD8(+) T-cells or hepatocytes. The protein is UPF0669 protein C6orf120 homolog of Rattus norvegicus (Rat).